Here is a 409-residue protein sequence, read N- to C-terminus: BRCA1-A complex subunit Abraxas 1 (409 aa).

An MPN domain is found at 7–160 (SAVLSGFVLG…HSLYKPQKGL (154 aa)). S48 is modified (phosphoserine). A coiled-coil region spans residues 206 to 260 (DGSLKEVHKINEMYASLQEELKSICKKVEDSEQAVDKLVKDVNRLKREIEKRRGA). The segment covering 362-372 (LLDTQDKRSKA) has biased composition (basic and acidic residues). Residues 362–409 (LLDTQDKRSKADTGSSNQDKASKMSSPETDEEIEKMKGFGEYSRSPTF) form a disordered region. Residues 373–388 (DTGSSNQDKASKMSSP) are compositionally biased toward polar residues. S386 and S387 each carry phosphoserine. T390 is subject to Phosphothreonine. Phosphoserine is present on residues S404 and S406. Positions 406 to 409 (SPTF) match the pSXXF motif motif.

Belongs to the FAM175 family. Abraxas subfamily. Component of the ARISC complex, at least composed of UIMC1/RAP80, ABRAXAS1, BRCC3/BRCC36, BABAM2 and BABAM1/NBA1. Component of the BRCA1-A complex, at least composed of BRCA1, BARD1, UIMC1/RAP80, ABRAXAS1, BRCC3/BRCC36, BABAM2 and BABAM1/NBA1. In the complex, interacts directly with UIMC1/RAP80, BRCC3/BRCC36 and BABAM2. Interacts directly (when phosphorylated at Ser-406) with BRCA1. Homodimer. The homodimer interacts directly (when phosphorylated at Ser-404 and Ser-406) with two BRCA1 chains, giving rise to a heterotetramer. Binds polyubiquitin. Post-translationally, phosphorylation of Ser-406 of the pSXXF motif by ATM or ATR constitutes a specific recognition motif for the BRCT domain of BRCA1. Ionizing radiation promotes rapid phosphorylation at Ser-404 and Ser-406 by ATM; this promotes recruitment of BRCA1 to sites of DNA damage.

The protein localises to the nucleus. Its function is as follows. Involved in DNA damage response and double-strand break (DSB) repair. Component of the BRCA1-A complex, acting as a central scaffold protein that assembles the various components of the complex and mediates the recruitment of BRCA1. The BRCA1-A complex specifically recognizes 'Lys-63'-linked ubiquitinated histones H2A and H2AX at DNA lesion sites, leading to target the BRCA1-BARD1 heterodimer to sites of DNA damage at DSBs. This complex also possesses deubiquitinase activity that specifically removes 'Lys-63'-linked ubiquitin on histones H2A and H2AX. This is BRCA1-A complex subunit Abraxas 1 from Homo sapiens (Human).